The following is a 250-amino-acid chain: High affinity immunoglobulin epsilon receptor subunit alpha (250 aa).

The first 23 residues, 1 to 23 (MVTGRSAQLCLALLFMSLDVILT), serve as a signal peptide directing secretion. Over 24–204 (ATEKSVLTLD…AYKCKYYWLQ (181 aa)) the chain is Extracellular. Positions 28–104 (SVLTLDPPWI…QGLFKSKPVY (77 aa)) constitute an Ig-like 1 domain. Cys-49 and Cys-92 are oxidised to a cystine. N-linked (GlcNAc...) asparagine glycans are attached at residues Asn-58, Asn-66, Asn-73, Asn-106, Asn-152, and Asn-167. Residues 114–181 (LQTSADMVLV…YHCKGYLRQV (68 aa)) form the Ig-like 2 domain. Cys-131 and Cys-174 are disulfide-bonded. The chain crosses the membrane as a helical span at residues 205 to 223 (LIFPLLVAILFAVDTGLLL). Residues 224-250 (STEEQFKSVLEIQKTGKYKKVETELLT) are Cytoplasmic-facing.

In terms of assembly, tetramer of an alpha chain, a beta chain, and two disulfide linked gamma chains. Interacts with IGHE (via CH3 region). As to expression, expressed in bone marrow mast cells, as well as in the pineal gland at night.

The protein resides in the cell membrane. Its function is as follows. High-affinity receptor for immunoglobulin epsilon/IgE. Mediates IgE effector functions in myeloid cells. Upon IgE binding and antigen/allergen cross-linking initiates signaling pathways that lead to myeloid cell activation and differentiation. On mast cells, basophils and eosinophils stimulates the secretion of vasoactive amines, lipid mediators and cytokines that contribute to inflammatory response, tissue remodeling and cytotoxicity against microbes. Triggers the immediate hypersensitivity response to allergens as a host defense mechanism against helminth parasites, pathogenic bacteria and venom toxicity. When dysregulated, it can elicit harmful life-threatening allergic and anaphylactic reactions. This is High affinity immunoglobulin epsilon receptor subunit alpha (Fcer1a) from Mus musculus (Mouse).